The primary structure comprises 520 residues: Solute carrier family 2, facilitated glucose transporter member 14 (520 aa).

The Cytoplasmic portion of the chain corresponds to M1–A29. The chain crosses the membrane as a helical span at residues V30–Y50. Topologically, residues N51–S88 are extracellular. N-linked (GlcNAc...) asparagine glycosylation is present at N67. A helical membrane pass occupies residues L89 to V109. Residues N110–S117 are Cytoplasmic-facing. Residues M118–A138 form a helical membrane-spanning segment. The Extracellular segment spans residues E139–R148. A helical membrane pass occupies residues L149–I169. The Cytoplasmic segment spans residues S170–A177. The chain crosses the membrane as a helical span at residues F178–L198. Q183 contacts D-glucose. Residues E199–L207 are Extracellular-facing. Residues W208 to C228 form a helical membrane-spanning segment. The Cytoplasmic portion of the chain corresponds to C229–P293. Residues I294–Y314 form a helical membrane-spanning segment. D-glucose contacts are provided by residues Q304–Q305 and N310. Residues Y315–P328 lie on the Extracellular side of the membrane. A helical membrane pass occupies residues I329–L349. A D-glucose-binding site is contributed by N339. At V350–L358 the chain is on the cytoplasmic side. The chain crosses the membrane as a helical span at residues H359 to L379. Over K380–G392 the chain is Extracellular. The chain crosses the membrane as a helical span at residues A393–V413. Residues E402 and W410 each coordinate D-glucose. Residues A414–P423 are Cytoplasmic-facing. A helical membrane pass occupies residues A424–F444. Over P445–L451 the chain is Extracellular. Residues G452 to F472 form a helical membrane-spanning segment. Topologically, residues K473–V520 are cytoplasmic. A disordered region spans residues A493 to V520.

This sequence belongs to the major facilitator superfamily. Sugar transporter (TC 2.A.1.1) family. Glucose transporter subfamily. In terms of tissue distribution, mainly expressed in testis. Also expressed in small intestine, liver and kidney.

It is found in the cell membrane. It carries out the reaction D-glucose(out) = D-glucose(in). It catalyses the reaction L-dehydroascorbate(out) = L-dehydroascorbate(in). Its function is as follows. Hexose transporter that can mediate the transport of glucose and dehydroascorbate across the cell membrane. This chain is Solute carrier family 2, facilitated glucose transporter member 14, found in Homo sapiens (Human).